The following is a 152-amino-acid chain: D-aminoacyl-tRNA deacylase 1 (152 aa).

The Gly-cisPro motif, important for rejection of L-amino acids motif lies at 140-141; that stretch reads GP.

The protein belongs to the DTD family. As to quaternary structure, homodimer.

It is found in the cytoplasm. The catalysed reaction is glycyl-tRNA(Ala) + H2O = tRNA(Ala) + glycine + H(+). It catalyses the reaction a D-aminoacyl-tRNA + H2O = a tRNA + a D-alpha-amino acid + H(+). Its function is as follows. An aminoacyl-tRNA editing enzyme that deacylates mischarged D-aminoacyl-tRNAs. Hydrolyzes correctly charged, achiral, glycyl-tRNA(Gly). Deacylates mischarged D.melanogaster and E.coli glycyl-tRNA(Ala), protecting cells against glycine mischarging by AlaRS. Acts via tRNA-based rather than protein-based catalysis; rejects L-amino acids rather than detecting D-amino acids in the active site. By recycling D-aminoacyl-tRNA to D-amino acids and free tRNA molecules, this enzyme counteracts the toxicity associated with the formation of D-aminoacyl-tRNA entities in vivo and helps enforce protein L-homochirality. The polypeptide is D-aminoacyl-tRNA deacylase 1 (dtd1) (Leishmania major).